The following is a 319-amino-acid chain: Ribonuclease Z (319 aa).

Zn(2+) contacts are provided by His62, His64, Asp66, His67, His139, Asp209, and His268. Catalysis depends on Asp66, which acts as the Proton acceptor.

Belongs to the RNase Z family. In terms of assembly, homodimer. Zn(2+) is required as a cofactor.

The catalysed reaction is Endonucleolytic cleavage of RNA, removing extra 3' nucleotides from tRNA precursor, generating 3' termini of tRNAs. A 3'-hydroxy group is left at the tRNA terminus and a 5'-phosphoryl group is left at the trailer molecule.. In terms of biological role, zinc phosphodiesterase, which displays some tRNA 3'-processing endonuclease activity. Probably involved in tRNA maturation, by removing a 3'-trailer from precursor tRNA. In Pseudomonas putida (strain ATCC 47054 / DSM 6125 / CFBP 8728 / NCIMB 11950 / KT2440), this protein is Ribonuclease Z.